Here is a 383-residue protein sequence, read N- to C-terminus: Putative F-box protein At1g77650 (383 aa).

Residues 1–47 (MAFLSLPSDVVEEFLFKTPIESLVLCKPTCKQLYALCNDKRFIYNHL) form the F-box domain.

The sequence is that of Putative F-box protein At1g77650 from Arabidopsis thaliana (Mouse-ear cress).